Here is a 237-residue protein sequence, read N- to C-terminus: Probable septum site-determining protein MinC (237 aa).

It belongs to the MinC family. Interacts with MinD and FtsZ.

Cell division inhibitor that blocks the formation of polar Z ring septums. Rapidly oscillates between the poles of the cell to destabilize FtsZ filaments that have formed before they mature into polar Z rings. Prevents FtsZ polymerization. The sequence is that of Probable septum site-determining protein MinC from Neisseria gonorrhoeae.